The primary structure comprises 407 residues: Probable endo-beta-1,4-glucanase celB (407 aa).

An N-terminal signal peptide occupies residues 1 to 18 (MALTLAATALVLLPLVTA). The N-linked (GlcNAc...) asparagine glycan is linked to Asn-136. Glu-216 functions as the Nucleophile in the catalytic mechanism. Glu-221 serves as the catalytic Proton donor.

Belongs to the glycosyl hydrolase 7 (cellulase C) family.

It is found in the secreted. It carries out the reaction Endohydrolysis of (1-&gt;4)-beta-D-glucosidic linkages in cellulose, lichenin and cereal beta-D-glucans.. Functionally, has endoglucanase activity on substrates containing beta-1,4 glycosidic bonds, like in carboxymethylcellulose (CMC), hydroxyethylcellulose (HEC) and beta-glucan. Involved in the degradation of complex natural cellulosic substrates. This chain is Probable endo-beta-1,4-glucanase celB (celB), found in Neosartorya fischeri (strain ATCC 1020 / DSM 3700 / CBS 544.65 / FGSC A1164 / JCM 1740 / NRRL 181 / WB 181) (Aspergillus fischerianus).